The primary structure comprises 532 residues: Probable calcium-binding mitochondrial carrier CBG00135 (532 aa).

EF-hand domains follow at residues 70 to 105 (EKEK…QTPH), 107 to 136 (PATM…NYVI), 137 to 172 (AHEA…MGVN), and 173 to 208 (LDDH…YPST). Asp-83, Asp-85, Asp-87, Ser-89, and Asp-94 together coordinate Ca(2+). Residues Asp-150, Asn-152, Asp-154, Glu-156, and Glu-161 each coordinate Ca(2+). Solcar repeat units lie at residues 243-329 (GVWW…IKRW), 339-425 (LTTY…LKSC), and 436-526 (PGVL…VRKQ). 6 helical membrane-spanning segments follow: residues 249–266 (LVAG…TAPF), 304–323 (GNGI…FMSY), 349–362 (SSAG…IYPM), 400–419 (GYLP…LTVY), 442–459 (LACG…SYPL), and 501–518 (GITP…ISYV).

Belongs to the mitochondrial carrier (TC 2.A.29) family.

It is found in the mitochondrion inner membrane. Functionally, calcium-dependent mitochondrial solute carrier. The polypeptide is Probable calcium-binding mitochondrial carrier CBG00135 (Caenorhabditis briggsae).